The primary structure comprises 219 residues: Cytidylate kinase (219 aa).

10–18 is a binding site for ATP; the sequence is GPAAAGKST.

Belongs to the cytidylate kinase family. Type 1 subfamily.

It is found in the cytoplasm. The catalysed reaction is CMP + ATP = CDP + ADP. It carries out the reaction dCMP + ATP = dCDP + ADP. This is Cytidylate kinase from Staphylococcus aureus (strain bovine RF122 / ET3-1).